A 109-amino-acid polypeptide reads, in one-letter code: Fluoride-specific ion channel FluC (109 aa).

The next 3 helical transmembrane spans lie at Leu21–Val41, Ile52–Tyr72, and Ile84–Ile104.

The protein belongs to the fluoride channel Fluc/FEX (TC 1.A.43) family.

It is found in the cell inner membrane. The catalysed reaction is fluoride(in) = fluoride(out). Its function is as follows. Fluoride-specific ion channel. Important for reducing fluoride concentration in the cell, thus reducing its toxicity. The chain is Fluoride-specific ion channel FluC from Prochlorococcus marinus (strain MIT 9301).